A 190-amino-acid polypeptide reads, in one-letter code: Peptidyl-tRNA hydrolase (190 aa).

F14 lines the tRNA pocket. H19 (proton acceptor) is an active-site residue. The tRNA site is built by M64, N66, and N112.

This sequence belongs to the PTH family. As to quaternary structure, monomer.

The protein localises to the cytoplasm. The enzyme catalyses an N-acyl-L-alpha-aminoacyl-tRNA + H2O = an N-acyl-L-amino acid + a tRNA + H(+). In terms of biological role, hydrolyzes ribosome-free peptidyl-tRNAs (with 1 or more amino acids incorporated), which drop off the ribosome during protein synthesis, or as a result of ribosome stalling. Catalyzes the release of premature peptidyl moieties from peptidyl-tRNA molecules trapped in stalled 50S ribosomal subunits, and thus maintains levels of free tRNAs and 50S ribosomes. This Staphylococcus saprophyticus subsp. saprophyticus (strain ATCC 15305 / DSM 20229 / NCIMB 8711 / NCTC 7292 / S-41) protein is Peptidyl-tRNA hydrolase.